The following is a 334-amino-acid chain: Ornithine carbamoyltransferase, catabolic (334 aa).

Carbamoyl phosphate contacts are provided by residues Ser-57–Thr-60, Gln-84, Arg-108, and His-135–Gln-138. Residues Asn-168, Asp-232, and Ser-236–Met-237 each bind L-ornithine. Residues Cys-274–Leu-275 and Arg-321 contribute to the carbamoyl phosphate site.

This sequence belongs to the aspartate/ornithine carbamoyltransferase superfamily. OTCase family.

It is found in the cytoplasm. It catalyses the reaction carbamoyl phosphate + L-ornithine = L-citrulline + phosphate + H(+). It functions in the pathway amino-acid degradation; L-arginine degradation via ADI pathway; carbamoyl phosphate from L-arginine: step 2/2. Reversibly catalyzes the transfer of the carbamoyl group from carbamoyl phosphate (CP) to the N(epsilon) atom of ornithine (ORN) to produce L-citrulline. The chain is Ornithine carbamoyltransferase, catabolic (arcB) from Avibacterium paragallinarum (Haemophilus gallinarum).